The chain runs to 387 residues: Exodeoxyribonuclease 7 large subunit (387 aa).

This sequence belongs to the XseA family. Heterooligomer composed of large and small subunits.

It is found in the cytoplasm. The catalysed reaction is Exonucleolytic cleavage in either 5'- to 3'- or 3'- to 5'-direction to yield nucleoside 5'-phosphates.. Functionally, bidirectionally degrades single-stranded DNA into large acid-insoluble oligonucleotides, which are then degraded further into small acid-soluble oligonucleotides. This Campylobacter lari (strain RM2100 / D67 / ATCC BAA-1060) protein is Exodeoxyribonuclease 7 large subunit.